Here is a 166-residue protein sequence, read N- to C-terminus: Lipoprotein signal peptidase (166 aa).

A run of 3 helical transmembrane segments spans residues 12 to 32 (WLWV…LILQ), 70 to 90 (WFFS…MYRS), and 102 to 122 (ALII…GFVV). Catalysis depends on residues Asp-123 and Asp-141. A helical membrane pass occupies residues 137 to 157 (FNLADSAICIGAALIVLEGFL).

The protein belongs to the peptidase A8 family.

The protein resides in the cell inner membrane. The enzyme catalyses Release of signal peptides from bacterial membrane prolipoproteins. Hydrolyzes -Xaa-Yaa-Zaa-|-(S,diacylglyceryl)Cys-, in which Xaa is hydrophobic (preferably Leu), and Yaa (Ala or Ser) and Zaa (Gly or Ala) have small, neutral side chains.. It functions in the pathway protein modification; lipoprotein biosynthesis (signal peptide cleavage). Its function is as follows. This protein specifically catalyzes the removal of signal peptides from prolipoproteins. The chain is Lipoprotein signal peptidase from Klebsiella pneumoniae (strain 342).